Consider the following 189-residue polypeptide: Leucine repeat adapter protein 25 (189 aa).

Serine 28 carries the phosphoserine modification. Positions 54–82 (ELSRAARAPDGPRHAAGSANSGSAAGPRR) are disordered. The span at 68-79 (AAGSANSGSAAG) shows a compositional bias: low complexity. One copy of the LRR repeat lies at 86-114 (LDSALAALRKEMVGLRQLDMSLLCQLWGL). Residues 136 to 175 (SSLHSDSSYPPDAGLSDDEEPPDASLPPDPPPLTVPQTHN) are disordered. Over residues 159-169 (ASLPPDPPPLT) the composition is skewed to pro residues. A Phosphoserine modification is found at serine 188.

It belongs to the FAM89 family. As to quaternary structure, interacts with SKI. Interacts (via LRR repeat) with CDC42BPA (via AGC-kinase C-terminal domain), CDC42BPB (via AGC-kinase C-terminal domain) and LIMK1 (via LIM zinc-binding domains). Forms a tripartite complex with CDC42BPA, CDC42BPB and LIMK1. (Microbial infection) Interacts with mouse mammary tumor virus (MMTV) envelope glycoprotein gp70. In terms of tissue distribution, widely expressed. Expressed in the early postnatal brain.

Its subcellular location is the cytoplasm. The protein localises to the cell projection. It localises to the lamellipodium. It is found in the cell surface. In terms of biological role, negatively regulates TGF-beta-induced signaling; in cooperation with SKI prevents the translocation of SMAD2 from the nucleus to the cytoplasm in response to TGF-beta. Acts as an adapter that mediates the specific recognition of LIMK1 by CDC42BPA and CDC42BPB in the lamellipodia. LRAP25-mediated CDC42BPA/CDC42BPB targeting to LIMK1 and the lamellipodium results in LIMK1 activation and the subsequent phosphorylation of CFL1 which is important for lamellipodial F-actin regulation. Its function is as follows. (Microbial infection) May be a receptor for mouse mammary tumor virus (MMTV). The protein is Leucine repeat adapter protein 25 of Mus musculus (Mouse).